The following is a 245-amino-acid chain: Cytochrome P450 CYP82H23 (245 aa).

The protein belongs to the cytochrome P450 family. Heme serves as cofactor.

In terms of biological role, probable heme-thiolate monooxygenase. The chain is Cytochrome P450 CYP82H23 from Panax ginseng (Korean ginseng).